We begin with the raw amino-acid sequence, 117 residues long: Large ribosomal subunit protein bL20 (117 aa).

The protein belongs to the bacterial ribosomal protein bL20 family.

In terms of biological role, binds directly to 23S ribosomal RNA and is necessary for the in vitro assembly process of the 50S ribosomal subunit. It is not involved in the protein synthesizing functions of that subunit. The chain is Large ribosomal subunit protein bL20 from Glaesserella parasuis serovar 5 (strain SH0165) (Haemophilus parasuis).